Consider the following 440-residue polypeptide: 3-phosphoshikimate 1-carboxyvinyltransferase (440 aa).

Lysine 26, serine 27, and arginine 31 together coordinate 3-phosphoshikimate. Lysine 26 lines the phosphoenolpyruvate pocket. 2 residues coordinate phosphoenolpyruvate: glycine 99 and arginine 127. Residues serine 172, glutamine 174, aspartate 320, and lysine 347 each coordinate 3-phosphoshikimate. Glutamine 174 serves as a coordination point for phosphoenolpyruvate. Aspartate 320 (proton acceptor) is an active-site residue. Phosphoenolpyruvate-binding residues include arginine 351 and arginine 392.

Belongs to the EPSP synthase family. As to quaternary structure, monomer.

It is found in the cytoplasm. It carries out the reaction 3-phosphoshikimate + phosphoenolpyruvate = 5-O-(1-carboxyvinyl)-3-phosphoshikimate + phosphate. Its pathway is metabolic intermediate biosynthesis; chorismate biosynthesis; chorismate from D-erythrose 4-phosphate and phosphoenolpyruvate: step 6/7. Functionally, catalyzes the transfer of the enolpyruvyl moiety of phosphoenolpyruvate (PEP) to the 5-hydroxyl of shikimate-3-phosphate (S3P) to produce enolpyruvyl shikimate-3-phosphate and inorganic phosphate. The chain is 3-phosphoshikimate 1-carboxyvinyltransferase from Xanthomonas oryzae pv. oryzae (strain MAFF 311018).